Reading from the N-terminus, the 860-residue chain is DNA mismatch repair protein MutS (860 aa).

608 to 615 (GPNMAGKS) is an ATP binding site.

It belongs to the DNA mismatch repair MutS family.

Its function is as follows. This protein is involved in the repair of mismatches in DNA. It is possible that it carries out the mismatch recognition step. This protein has a weak ATPase activity. The chain is DNA mismatch repair protein MutS from Borrelia turicatae (strain 91E135).